A 261-amino-acid chain; its full sequence is Transcription factor BEE 3 (261 aa).

The segment covering 72 to 82 has biased composition (low complexity); sequence NIQNNEESSSQ. 2 disordered regions span residues 72–158 and 242–261; these read NIQN…TDSH and VEMG…SWTL. The span at 95 to 123 shows a compositional bias: polar residues; the sequence is VSTSENSVSDQTLSTSSAQVSINGNISTK. Residues 135 to 146 are compositionally biased toward basic and acidic residues; sequence NREEEKEREVVH. Residues 153 to 203 form the bHLH domain; it reads QATDSHSIAERVRRGKINERLKCLQDIVPGCYKTMGMATMLDEIINYVQSL.

Homodimer. In terms of tissue distribution, expressed in stems.

Its subcellular location is the nucleus. Functionally, positive regulator of brassinosteroid signaling. This chain is Transcription factor BEE 3 (BEE3), found in Arabidopsis thaliana (Mouse-ear cress).